Here is a 278-residue protein sequence, read N- to C-terminus: 1-acyl-sn-glycerol-3-phosphate acyltransferase beta (278 aa).

An N-terminal signal peptide occupies residues 1 to 23 (MELWPCLAAALLLLLLLVQLSRA). At 24-29 (AEFYAK) the chain is on the lumenal side. The helical transmembrane segment at 30 to 50 (VALYCALCFTVSAVASLVCLL) threads the bilayer. Residues 51 to 121 (RHGGRTVENM…PERCVQIAKR (71 aa)) lie on the Cytoplasmic side of the membrane. The HXXXXD motif motif lies at 98-103 (HQSILD). Residues 122-142 (ELLFLGPVGLIMYLGGVFFIN) traverse the membrane as a helical segment. At 143-278 (RQRSSTAMTV…TAGSGVQPAQ (136 aa)) the chain is on the lumenal side. The EGTR motif motif lies at 172–175 (EGTR).

The protein belongs to the 1-acyl-sn-glycerol-3-phosphate acyltransferase family. Expressed predominantly in adipose tissue, pancreas and liver.

It is found in the endoplasmic reticulum membrane. It catalyses the reaction a 1-acyl-sn-glycero-3-phosphate + an acyl-CoA = a 1,2-diacyl-sn-glycero-3-phosphate + CoA. It carries out the reaction 1-(9Z-octadecenoyl)-sn-glycero-3-phosphate + (9Z)-octadecenoyl-CoA = 1,2-di-(9Z-octadecenoyl)-sn-glycero-3-phosphate + CoA. The enzyme catalyses 1-(9Z-octadecenoyl)-sn-glycero-3-phosphate + hexadecanoyl-CoA = 1-(9Z)-octadecenoyl-2-hexadecanoyl-sn-glycero-3-phosphate + CoA. The catalysed reaction is heptadecanoyl-CoA + 1-(9Z-octadecenoyl)-sn-glycero-3-phosphate = 1-(9Z)-octadecenoyl-2-heptadecanoyl-sn-glycero-3-phosphate + CoA. It catalyses the reaction 1-(9Z-octadecenoyl)-sn-glycero-3-phosphate + (9Z,12Z)-octadecadienoyl-CoA = 1-(9Z)-octadecenoyl-2-(9Z,12Z)-octadecadienoyl-sn-glycero-3-phosphate + CoA. It carries out the reaction 1-(9Z-octadecenoyl)-sn-glycero-3-phosphate + tetradecanoyl-CoA = 1-(9Z)-octadecenoyl-2-tetradecanoyl-sn-glycero-3-phosphate + CoA. The enzyme catalyses pentadecanoyl-CoA + 1-(9Z-octadecenoyl)-sn-glycero-3-phosphate = 1-(9Z)-octadecenoyl-2-pentadecanoyl-sn-glycero-3-phosphate + CoA. The catalysed reaction is 1-hexadecanoyl-sn-glycero-3-phosphate + (9Z)-octadecenoyl-CoA = 1-hexadecanoyl-2-(9Z-octadecenoyl)-sn-glycero-3-phosphate + CoA. It catalyses the reaction 1-tetradecanoyl-sn-glycerol 3-phosphate + (9Z)-octadecenoyl-CoA = 1-tetradecanoyl-2-(9Z)-octadecenoyl-sn-glycero-3-phosphate + CoA. It carries out the reaction 1-(9Z,12Z,15Z)-octadecatrienoyl-sn-glycero-3-phosphate + (9Z)-octadecenoyl-CoA = 1-(9Z,12Z,15Z)-octadecatrienoyl-2-(9Z)-octadecenoyl-sn-glycero-3-phosphate + CoA. The enzyme catalyses 1-(6Z,9Z,12Z-octadecatrienoyl)-sn-glycero-3-phosphate + (9Z)-octadecenoyl-CoA = (6Z,9Z,12Z)-octadecatrienoyl-2-(9Z)-octadecenoyl-sn-glycero-3-phosphate + CoA. The catalysed reaction is 1-eicosanoyl-sn-glycero-3-phosphate + (9Z)-octadecenoyl-CoA = 1-eicosanoyl-2-(9Z)-octadecenoyl-sn-glycero-3-phosphate + CoA. It catalyses the reaction 1-hexadecanoyl-sn-glycero-3-phosphate + octadecanoyl-CoA = 1-hexadecanoyl-2-octadecanoyl-sn-glycero-3-phosphate + CoA. It carries out the reaction 1-hexadecanoyl-sn-glycero-3-phosphate + (5Z,8Z,11Z,14Z)-eicosatetraenoyl-CoA = 1-hexadecanoyl-2-(5Z,8Z,11Z,14Z-eicosatetraenoyl)-sn-glycero-3-phosphate + CoA. The enzyme catalyses 1-hexadecanoyl-sn-glycero-3-phosphate + hexadecanoyl-CoA = 1,2-dihexadecanoyl-sn-glycero-3-phosphate + CoA. The catalysed reaction is 1-hexadecanoyl-sn-glycero-3-phosphate + tetradecanoyl-CoA = 1-hexadecanoyl-2-tetradecanoyl-sn-glycero-3-phosphate + CoA. It catalyses the reaction (11Z)-octadecenoyl-CoA + 1-(9Z-octadecenoyl)-sn-glycero-3-phosphate = 1-(9Z)-octadecenoyl-2-(11Z)-octadecenoyl-sn-glycero-3-phosphate + CoA. It functions in the pathway phospholipid metabolism; CDP-diacylglycerol biosynthesis; CDP-diacylglycerol from sn-glycerol 3-phosphate: step 2/3. In terms of biological role, converts 1-acyl-sn-glycerol-3-phosphate (lysophosphatidic acid or LPA) into 1,2-diacyl-sn-glycerol-3-phosphate (phosphatidic acid or PA) by incorporating an acyl moiety at the sn-2 position of the glycerol backbone. The protein is 1-acyl-sn-glycerol-3-phosphate acyltransferase beta (AGPAT2) of Homo sapiens (Human).